Reading from the N-terminus, the 517-residue chain is Ribose import ATP-binding protein RbsA 2 (517 aa).

2 ABC transporter domains span residues 11–251 (LEMR…VGRD) and 263–507 (YDPG…ALAT). An ATP-binding site is contributed by 43-50 (GENGAGKS).

It belongs to the ABC transporter superfamily. Ribose importer (TC 3.A.1.2.1) family. As to quaternary structure, the complex is composed of an ATP-binding protein (RbsA), two transmembrane proteins (RbsC) and a solute-binding protein (RbsB).

It localises to the cell inner membrane. The enzyme catalyses D-ribose(out) + ATP + H2O = D-ribose(in) + ADP + phosphate + H(+). In terms of biological role, part of the ABC transporter complex RbsABC involved in ribose import. Responsible for energy coupling to the transport system. This is Ribose import ATP-binding protein RbsA 2 from Burkholderia pseudomallei (strain 1710b).